The chain runs to 279 residues: Probable ribosomal RNA small subunit methyltransferase A (279 aa).

The S-adenosyl-L-methionine site is built by Asn23, Leu25, Gly50, Glu71, Asp95, and Asn110.

This sequence belongs to the class I-like SAM-binding methyltransferase superfamily. rRNA adenine N(6)-methyltransferase family. RsmA subfamily.

The protein resides in the cytoplasm. Its function is as follows. Specifically dimethylates two adjacent adenosines in the loop of a conserved hairpin near the 3'-end of 16S rRNA in the 30S particle. May play a critical role in biogenesis of 30S subunits. This is Probable ribosomal RNA small subunit methyltransferase A from Thermococcus kodakarensis (strain ATCC BAA-918 / JCM 12380 / KOD1) (Pyrococcus kodakaraensis (strain KOD1)).